Reading from the N-terminus, the 887-residue chain is Alanine--tRNA ligase (887 aa).

Basic and acidic residues predominate over residues 425–441 (MQEQKSRARSDRREKQQ). Residues 425 to 448 (MQEQKSRARSDRREKQQTGDGAGS) are disordered. Zn(2+) is bound by residues His569, His573, Cys672, and His676.

The protein belongs to the class-II aminoacyl-tRNA synthetase family. Zn(2+) is required as a cofactor.

It is found in the cytoplasm. The catalysed reaction is tRNA(Ala) + L-alanine + ATP = L-alanyl-tRNA(Ala) + AMP + diphosphate. In terms of biological role, catalyzes the attachment of alanine to tRNA(Ala) in a two-step reaction: alanine is first activated by ATP to form Ala-AMP and then transferred to the acceptor end of tRNA(Ala). Also edits incorrectly charged Ser-tRNA(Ala) and Gly-tRNA(Ala) via its editing domain. The polypeptide is Alanine--tRNA ligase (Chlorobium luteolum (strain DSM 273 / BCRC 81028 / 2530) (Pelodictyon luteolum)).